We begin with the raw amino-acid sequence, 202 residues long: UDP-N-acetylglucosamine transferase subunit ALG13 (202 aa).

The protein belongs to the glycosyltransferase 28 family. As to quaternary structure, heterodimer with ALG14 to form a functional enzyme.

The protein resides in the endoplasmic reticulum. The enzyme catalyses an N-acetyl-alpha-D-glucosaminyl-diphospho-di-trans,poly-cis-dolichol + UDP-N-acetyl-alpha-D-glucosamine = an N,N'-diacetylchitobiosyl-diphospho-di-trans,poly-cis-dolichol + UDP + H(+). Its function is as follows. Involved in protein N-glycosylation. Essential for the second step of the dolichol-linked oligosaccharide pathway. This is UDP-N-acetylglucosamine transferase subunit ALG13 (ALG13) from Saccharomyces cerevisiae (strain ATCC 204508 / S288c) (Baker's yeast).